The sequence spans 399 residues: tRNA-dihydrouridine(16/17) synthase [NAD(P)(+)] (399 aa).

FMN contacts are provided by residues 24–26 (PMV) and glutamine 80. The active-site Proton donor is cysteine 109. FMN-binding positions include lysine 148, histidine 176, 211-213 (NGN), and 235-236 (AE).

The protein belongs to the Dus family. Dus1 subfamily. FMN is required as a cofactor.

Its subcellular location is the nucleus. It is found in the mitochondrion. The catalysed reaction is 5,6-dihydrouridine(16) in tRNA + NADP(+) = uridine(16) in tRNA + NADPH + H(+). The enzyme catalyses 5,6-dihydrouridine(16) in tRNA + NAD(+) = uridine(16) in tRNA + NADH + H(+). It catalyses the reaction 5,6-dihydrouridine(17) in tRNA + NAD(+) = uridine(17) in tRNA + NADH + H(+). It carries out the reaction 5,6-dihydrouridine(17) in tRNA + NADP(+) = uridine(17) in tRNA + NADPH + H(+). The catalysed reaction is a 5,6-dihydrouridine in mRNA + NAD(+) = a uridine in mRNA + NADH + H(+). The enzyme catalyses a 5,6-dihydrouridine in mRNA + NADP(+) = a uridine in mRNA + NADPH + H(+). Its function is as follows. Catalyzes the synthesis of dihydrouridine, a modified base found in the D-loop of most tRNAs. Also able to mediate dihydrouridylation of some mRNAs, thereby affecting their translation. The chain is tRNA-dihydrouridine(16/17) synthase [NAD(P)(+)] from Schizosaccharomyces pombe (strain 972 / ATCC 24843) (Fission yeast).